A 256-amino-acid chain; its full sequence is Isoprenyl transferase (256 aa).

Residue D33 is part of the active site. D33 is a binding site for Mg(2+). Substrate contacts are provided by residues 34–37 (GNGR), W38, R46, H50, and 78–80 (STE). N81 serves as the catalytic Proton acceptor. Residues W82, R84, R201, and 207–209 (RIS) contribute to the substrate site. E220 contributes to the Mg(2+) binding site.

It belongs to the UPP synthase family. As to quaternary structure, homodimer. It depends on Mg(2+) as a cofactor.

Its function is as follows. Catalyzes the condensation of isopentenyl diphosphate (IPP) with allylic pyrophosphates generating different type of terpenoids. The chain is Isoprenyl transferase from Staphylococcus aureus (strain Mu50 / ATCC 700699).